Consider the following 391-residue polypeptide: N-acetylaspartylglutamate synthase A (391 aa).

In terms of domain architecture, ATP-grasp spans 115-300 (FQELAGHGVP…VGGIIADYTM (186 aa)). ATP-binding positions include Lys-154, 189–199 (QKYVKESHGKD), and Arg-215. Mg(2+) is bound by residues Asp-260, Glu-273, and Asn-275. Residues Asp-260, Glu-273, and Asn-275 each coordinate Mn(2+). A Phosphoserine modification is found at Ser-319. Over residues 341 to 350 (TINSGSTSSE) the composition is skewed to polar residues. Residues 341–379 (TINSGSTSSESEPELGEIRDSSASTMGAPPSMLPEPGYN) are disordered.

This sequence belongs to the RimK family. The cofactor is Mg(2+). Mn(2+) is required as a cofactor.

The protein localises to the cytoplasm. The catalysed reaction is N-acetyl-L-aspartate + L-glutamate + ATP = N-acetyl-L-aspartyl-L-glutamate + ADP + phosphate + H(+). It catalyses the reaction N-acetyl-L-aspartate + 2 L-glutamate + 2 ATP = N-acetyl-L-aspartyl-L-glutamyl-L-glutamate + 2 ADP + 2 phosphate + 2 H(+). Its function is as follows. Catalyzes the synthesis of N-acetyl-L-aspartyl-L-glutamate (NAAG) and N-acetyl-L-aspartyl-L-glutamyl-L-glutamate. The protein is N-acetylaspartylglutamate synthase A (RIMKLA) of Homo sapiens (Human).